We begin with the raw amino-acid sequence, 585 residues long: Frizzled-5 (585 aa).

A signal peptide spans 1-26 (MARPDPSAPPSLLLLLLAQLVGRAAA). The Extracellular segment spans residues 27 to 238 (ASKAPVCQEI…PDERTFATFW (212 aa)). The region spanning 28 to 150 (SKAPVCQEIT…GDAEVLCMDY (123 aa)) is the FZ domain. Intrachain disulfides connect Cys33/Cys94, Cys41/Cys87, Cys78/Cys116, Cys105/Cys147, and Cys109/Cys133. The N-linked (GlcNAc...) asparagine glycan is linked to Asn47. Asn151 carries an N-linked (GlcNAc...) asparagine glycan. A disordered region spans residues 156–182 (TTASPKSFPAKPTLPGPPGAPSSGGEC). A helical membrane pass occupies residues 239–259 (IGLWSVLCFISTSTTVATFLI). The Cytoplasmic portion of the chain corresponds to 260–270 (DMERFRYPERP). The helical transmembrane segment at 271–291 (IIFLSACYLCVSLGFLVRLVV) threads the bilayer. Residues 292–315 (GHASVACSREHSHIHYETTGPALC) lie on the Extracellular side of the membrane. A helical transmembrane segment spans residues 316–336 (TVVFLLVYFFGMASSIWWVIL). Over 337 to 358 (SLTWFLAAGMKWGNEAIAGYAQ) the chain is Cytoplasmic. Residues 359 to 379 (YFHLAAWLIPSVKSITALALS) traverse the membrane as a helical segment. The Extracellular segment spans residues 380 to 402 (SVDGDPVAGVCYVGNQNLNSLRG). The chain crosses the membrane as a helical span at residues 403–423 (FVLGPLVLYLLVGTLFLLAGF). Residues 424–449 (VSLFRIRSVIKQGGTKTDKLEKLMIR) lie on the Cytoplasmic side of the membrane. Residues 450-470 (IGIFTLLYTVPASIVVACYLY) traverse the membrane as a helical segment. Over 471-500 (EQHYRESWEAALTCACPGSDAGQPRAKPEY) the chain is Extracellular. The helical transmembrane segment at 501 to 521 (WVLMLKYFMCLVVGITSGVWI) threads the bilayer. Topologically, residues 522-585 (WSGKTLESWR…YHKQVSLSHV (64 aa)) are cytoplasmic. The Lys-Thr-X-X-X-Trp motif, mediates interaction with the PDZ domain of Dvl family members motif lies at 525–530 (KTLESW). The PDZ-binding signature appears at 583 to 585 (SHV).

Belongs to the G-protein coupled receptor Fz/Smo family. Binding of unsaturated fatty acid molecules (via FZ domain) promotes homodimerization (via FZ domain). Interacts with WNT2B. Interacts with WNT7A. Interacts with GOPC. Post-translationally, ubiquitinated by RNF43 and ZNRF3, leading to its degradation by the proteasome.

Its subcellular location is the cell membrane. It is found in the golgi apparatus membrane. The protein resides in the synapse. The protein localises to the perikaryon. It localises to the cell projection. Its subcellular location is the dendrite. It is found in the axon. In terms of biological role, receptor for Wnt proteins. Functions in the canonical Wnt/beta-catenin signaling pathway. In vitro activates WNT2, WNT10B, WNT5A, but not WNT2B or WNT4 signaling. In neurons, activation by WNT7A promotes formation of synapses. May be involved in transduction and intercellular transmission of polarity information during tissue morphogenesis and/or in differentiated tissues. Plays a role in yolk sac angiogenesis and in placental vascularization. Plays a role in ocular development. This is Frizzled-5 (Fzd5) from Rattus norvegicus (Rat).